The sequence spans 197 residues: Peptidyl-tRNA hydrolase (197 aa).

Residue tyrosine 21 coordinates tRNA. Histidine 26 serves as the catalytic Proton acceptor. TRNA contacts are provided by tyrosine 72, asparagine 74, and asparagine 120.

Belongs to the PTH family. Monomer.

The protein resides in the cytoplasm. It carries out the reaction an N-acyl-L-alpha-aminoacyl-tRNA + H2O = an N-acyl-L-amino acid + a tRNA + H(+). Functionally, hydrolyzes ribosome-free peptidyl-tRNAs (with 1 or more amino acids incorporated), which drop off the ribosome during protein synthesis, or as a result of ribosome stalling. Catalyzes the release of premature peptidyl moieties from peptidyl-tRNA molecules trapped in stalled 50S ribosomal subunits, and thus maintains levels of free tRNAs and 50S ribosomes. This Saccharophagus degradans (strain 2-40 / ATCC 43961 / DSM 17024) protein is Peptidyl-tRNA hydrolase.